The chain runs to 222 residues: Protein DEHYDRATION-INDUCED 19 homolog 6 (222 aa).

Position 116 is a phosphoserine (Ser116).

Belongs to the Di19 family. In terms of processing, phosphorylated in vitro by CPK3 or CPK11. Expressed in seedlings, roots, leaves, stems, flowers and siliques.

Its subcellular location is the nucleus. The protein is Protein DEHYDRATION-INDUCED 19 homolog 6 (DI19-6) of Arabidopsis thaliana (Mouse-ear cress).